The primary structure comprises 576 residues: Formate--tetrahydrofolate ligase 2 (576 aa).

Residue 69–76 (TPLGEGKT) coordinates ATP.

This sequence belongs to the formate--tetrahydrofolate ligase family.

It carries out the reaction (6S)-5,6,7,8-tetrahydrofolate + formate + ATP = (6R)-10-formyltetrahydrofolate + ADP + phosphate. The protein operates within one-carbon metabolism; tetrahydrofolate interconversion. In Rubrobacter xylanophilus (strain DSM 9941 / JCM 11954 / NBRC 16129 / PRD-1), this protein is Formate--tetrahydrofolate ligase 2.